Consider the following 213-residue polypeptide: Putative 3-methyladenine DNA glycosylase (213 aa).

The protein belongs to the DNA glycosylase MPG family.

The chain is Putative 3-methyladenine DNA glycosylase from Corynebacterium jeikeium (strain K411).